Consider the following 465-residue polypeptide: MELLDMNSMAASIGVSVAVLRFLLCFVATIPISFLWRFIPSRLGKHIYSAASGAFLSYLSFGFSSNLHFLVPMTIGYASMAIYRPLSGFITFFLGFAYLIGCHVFYMSGDAWKEGGIDSTGALMVLTLKVISCSINYNDGMLKEEGLREAQKKNRLIQMPSLIEYFGYCLCCGSHFAGPVFEMKDYLEWTEEKGIWAVSEKGKRPSPYGAMIRAVFQAAICMALYLYLVPQFPLTRFTEPVYQEWGFLKRFGYQYMAGFTARWKYYFIWSISEASIIISGLGFSGWTDETQTKAKWDRAKNVDILGVELAKSAVQIPLFWNIQVSTWLRHYVYERIVKPGKKAGFFQLLATQTVSAVWHGLYPGYIIFFVQSALMIDGSKAIYRWQQAIPPKMAMLRNVLVLINFLYTVVVLNYSSVGFMVLSLHETLVAFKSVYYIGTVIPIAVLLLSYLVPVKPVRPKTRKEE.

9 helical membrane passes run 15–35, 55–75, 86–106, 161–181, 214–234, 266–286, 356–376, 399–419, and 434–454; these read VSVA…ISFL, FLSY…PMTI, LSGF…HVFY, SLIE…GPVF, AVFQ…QFPL, YFIW…FSGW, AVWH…ALMI, VLVL…SVGF, and VYYI…LVPV. Residue His359 is part of the active site.

Belongs to the membrane-bound acyltransferase family. Interacts with GPAT9 and DGAT1. In terms of tissue distribution, expressed in rosette leaves, pollen grains, developing embryos and developing seeds.

It localises to the endoplasmic reticulum membrane. The catalysed reaction is a 1-acyl-sn-glycero-3-phosphocholine + an acyl-CoA = a 1,2-diacyl-sn-glycero-3-phosphocholine + CoA. The enzyme catalyses 1-(9Z-octadecenoyl)-sn-glycero-3-phosphocholine + (9Z)-octadecenoyl-CoA = 1,2-di-(9Z-octadecenoyl)-sn-glycero-3-phosphocholine + CoA. It catalyses the reaction 1-(9Z-octadecenoyl)-sn-glycero-3-phosphocholine + (9Z,12Z)-octadecadienoyl-CoA = 1-(9Z)-octadecenoyl-2-(9Z,12Z)-octadecadienoyl-sn-glycero-3-phosphocholine + CoA. It carries out the reaction (9Z,12Z,15Z)-octadecatrienoyl-CoA + 1-(9Z-octadecenoyl)-sn-glycero-3-phosphocholine = 1-(9Z-octadecaenoyl)-2-(9Z,12Z,15Z-octadecatrienoyl)-sn-glycero-3-phosphocholine + CoA. The catalysed reaction is a 1-acyl-sn-glycero-3-phosphoethanolamine + an acyl-CoA = a 1,2-diacyl-sn-glycero-3-phosphoethanolamine + CoA. The enzyme catalyses a 1-acyl-sn-glycero-3-phospho-L-serine + an acyl-CoA = a 1,2-diacyl-sn-glycero-3-phospho-L-serine + CoA. Lysophospholipid acyltransferase with broad specificity. Mediates the conversion of lysophosphatidylethanolamine (1-acyl-sn-glycero-3-phosphoethanolamine or LPE) into phosphatidylethanolamine (1,2-diacyl-sn-glycero-3-phosphoethanolamine or PE) (LPEAT activity). Catalyzes the acylation of lysophosphatidylserine (1-acyl-2-hydroxy-sn-glycero-3-phospho-L-serine or LPS) into phosphatidylserine (1,2-diacyl-sn-glycero-3-phospho-L-serine or PS) (LPSAT activity). Can convert lysophosphatidylcholine (1-acyl-sn-glycero-3-phosphocholine or LPC) into phosphatidylcholine (1,2-diacyl-sn-glycero-3-phosphocholine or PC) (LPCAT activity). Exhibits preference for C18-unsaturated acyl-CoA when transferring an acyl group to lysophosphatidylcholine. Can also utilize lysophosphatidylglycerol (LPG) as substrate in vitro. Has neither activity towards lysophosphatidic acid (LPA) nor lysophosphatidylinositol (LPI). Lysophospholipid acyltransferases catalyze the reacylation step of the phospholipid remodeling pathway also known as the Lands cycle. The primary function of the Lands cycle is to provide a route for acyl remodeling to modify fatty acid (FA) composition of phospholipids derived from the Kennedy pathway. Is involved in PC acyl editing and phosphocholine headgroup exchange between PC and diacylglycerols. This processes control the majority of acyl fluxes through PC to provide polyunsaturated fatty acids for triacylglycerols synthesis in seeds. Involved with LPCAT1 in the direct incorporation of newly synthesized fatty acids exported form the chloroplast into PC through acyl editing. The protein is Lysophospholipid acyltransferase 2 of Arabidopsis thaliana (Mouse-ear cress).